We begin with the raw amino-acid sequence, 208 residues long: Fibroblast growth factor 6 (208 aa).

Residues Met-1–Pro-37 form the signal peptide. A glycan (N-linked (GlcNAc...) asparagine) is linked at Asn-45. Cys-90 and Cys-157 are oxidised to a cystine.

This sequence belongs to the heparin-binding growth factors family. As to quaternary structure, interacts with FGFR1, FGFR2 and FGFR4. Affinity between fibroblast growth factors (FGFs) and their receptors is increased by heparan sulfate glycosaminoglycans that function as coreceptors. In terms of tissue distribution, leukemia cell lines with platelet/ megakaryocytic differentiation potential.

Its subcellular location is the secreted. It is found in the extracellular space. Functionally, plays an important role in the regulation of cell proliferation, cell differentiation, angiogenesis and myogenesis, and is required for normal muscle regeneration. This Homo sapiens (Human) protein is Fibroblast growth factor 6 (FGF6).